Reading from the N-terminus, the 383-residue chain is D-alanine--D-alanine ligase (383 aa).

The ATP-grasp domain maps to 164 to 373 (KLAFQAAGLE…YSALIDELIT (210 aa)). Residue 196 to 251 (VAELGFPVFVKPARAGSSFGITRVDEPSQLDAAIATAREHDLKLVVEAGIDGREIE) coordinates ATP. Mg(2+) contacts are provided by Asp-327, Glu-340, and Asn-342.

This sequence belongs to the D-alanine--D-alanine ligase family. Mg(2+) serves as cofactor. Requires Mn(2+) as cofactor.

The protein resides in the cytoplasm. It carries out the reaction 2 D-alanine + ATP = D-alanyl-D-alanine + ADP + phosphate + H(+). It participates in cell wall biogenesis; peptidoglycan biosynthesis. In terms of biological role, cell wall formation. The protein is D-alanine--D-alanine ligase of Kocuria rhizophila (strain ATCC 9341 / DSM 348 / NBRC 103217 / DC2201).